The chain runs to 457 residues: Peptidyl-prolyl cis-trans isomerase FKBP5 (457 aa).

N-acetylmethionine is present on M1. The interval 1 to 26 is disordered; the sequence is MTTDEGAKNSRGNPAATVAEQGEDVT. N6-acetyllysine is present on K28. PPIase FKBP-type domains lie at 50–138 and 165–251; these read GDRV…LDFK and GARV…KSFE. 3 TPR repeats span residues 268 to 301, 317 to 350, and 351 to 384; these read AAIV…LEME, LAAF…DSAN, and EKGL…NPQN. The segment at 421–457 is disordered; the sequence is AKEEANKAMSKKTSEGVTNEKLTASHAVEEEKPEGHV. The residue at position 445 (S445) is a Phosphoserine. Residues 447–457 are compositionally biased toward basic and acidic residues; it reads AVEEEKPEGHV.

Part of a heteromultimeric cytoplasmic complex with HSP90AA1, HSPA1A/HSPA1B and steroid receptors. Upon ligand binding dissociates from the complex and FKBP4 takes its place. Interacts with functionally mature heterooligomeric progesterone receptor complexes along with HSP90 and TEBP. Interacts with NR3C1. Interacts with Akt/AKT1 and PHLPP1; enhancing dephosphorylation and subsequent activation of Akt/AKT1. Interacts with IFI44L; this interaction modulates the kinase activity of IKBKB and IKBKE. Interacts with IKBKB and IKBKE. Acetylation impairs ability to promote interaction between Akt/AKT1 and PHLPP1. Deacetylation by SIRT7 promotes interaction between Akt/AKT1 and PHLPP1, leading to suppress Akt/AKT1 activation. Post-translationally, ubiquitinated, leading to degradation in a proteasome-dependent manner. Deubiquitinated by USP49, leading to stabilization.

The protein resides in the cytoplasm. It localises to the nucleus. The catalysed reaction is [protein]-peptidylproline (omega=180) = [protein]-peptidylproline (omega=0). Inhibited by both FK506 and rapamycin. Its function is as follows. Immunophilin protein with PPIase and co-chaperone activities. Component of unligated steroid receptors heterocomplexes through interaction with heat-shock protein 90 (HSP90). Plays a role in the intracellular trafficking of heterooligomeric forms of steroid hormone receptors maintaining the complex into the cytoplasm when unliganded. Acts as a regulator of Akt/AKT1 activity by promoting the interaction between Akt/AKT1 and PHLPP1, thereby enhancing dephosphorylation and subsequent activation of Akt/AKT1. Interacts with IKBKE and IKBKB which facilitates IKK complex assembly leading to increased IKBKE and IKBKB kinase activity, NF-kappaB activation, and IFN production. This chain is Peptidyl-prolyl cis-trans isomerase FKBP5 (FKBP5), found in Saimiri boliviensis boliviensis (Bolivian squirrel monkey).